Consider the following 413-residue polypeptide: HVDSGKSTTTGHLIYKCGGIDKRTIEKFEKEAQEMGKGSFKYAWVLDKLKAERERGITIDIALWKFETAKYYVTIIDAPGHRDFIKNMITGTSQADCAVLIVAAGTGEFEAGISKNGQTREHALLAFTLGVKQLIVGVNKMDSTEPPYSESRFEEIKKEVSSYIKKIGYNPAAVAFVPISGWHGDNMLEASTKMPWFKGWNVERKEGKAEGKCLIEALDAILPPARPTDKALRLPLQDVYKIGGIGTVPVGRVETGILKPGTIVVFAPANITTEVKSVEMHHEALQEAVPGDNVGFNVKNVSVKELRRGYVAGDSKNNPPKGAADFTAQVIVLNHPGQISNGYTPVLDCHTAHIACKFAEIKEKVDRRTGKSTEDNPKSIKSGDAAIVNLVPSKPLCVESFQEFPPLGRFAVR.

GTP contacts are provided by residues 1-7 (HVDSGKS), 77-81 (DAPGH), and 139-142 (NKMD). The 228-residue stretch at 1-228 (HVDSGKSTTT…DAILPPARPT (228 aa)) folds into the tr-type G domain. 5-glutamyl glycerylphosphorylethanolamine occurs at positions 287 and 360.

It belongs to the TRAFAC class translation factor GTPase superfamily. Classic translation factor GTPase family. EF-Tu/EF-1A subfamily.

It is found in the cytoplasm. This protein promotes the GTP-dependent binding of aminoacyl-tRNA to the A-site of ribosomes during protein biosynthesis. The polypeptide is Elongation factor 1-alpha (Heliocheilus albipunctella (Millet head miner)).